A 370-amino-acid polypeptide reads, in one-letter code: Mitogen-activated protein kinase 3 (370 aa).

The Protein kinase domain occupies 38–324; sequence RPPIIPIGRG…VEQALNHQYL (287 aa). ATP-binding positions include 44–52 and Lys67; that span reads IGRGAYGIV. Residue Asp164 is the Proton acceptor of the active site. The residue at position 196 (Thr196) is a Phosphothreonine. The TXY signature appears at 196 to 198; that stretch reads TEY. Position 198 is a phosphotyrosine (Tyr198). Thr201 carries the post-translational modification Phosphothreonine.

This sequence belongs to the protein kinase superfamily. CMGC Ser/Thr protein kinase family. MAP kinase subfamily. As to quaternary structure, interacts with DSPTP1B/MKP2, NDPK2 and VIP1. The interaction with DSPTP1B/MKP2 is repressed by fungal elicitation. Binds to LIP5. Interacts with VQ4. Interacts with RACK1A, RACK1B and RACK1C. Interacts with FLZ9. Interacts with MKK5. In terms of processing, dually phosphorylated on Thr-196 and Tyr-198, which activates the enzyme. Dephosphorylated by DSPTP1B/MKP2.

It is found in the cytoplasm. The protein localises to the nucleus. It localises to the cell cortex. It carries out the reaction L-seryl-[protein] + ATP = O-phospho-L-seryl-[protein] + ADP + H(+). It catalyses the reaction L-threonyl-[protein] + ATP = O-phospho-L-threonyl-[protein] + ADP + H(+). With respect to regulation, activated by threonine and tyrosine phosphorylation. Activated by MAP kinase kinases MKK4, MKK5, MKK7 and MKK9. Activated in response to hydrogen peroxide, ozone, salt stress and flagellin bacterial elicitor. Triggered by Agrobacterium upon T-DNA transfer. Repressed by DSPTP1B/MKP2-mediated dephosphorylation. Functionally, involved in oxidative stress-mediated signaling cascade (such as ozone). Involved in the innate immune MAP kinase signaling cascade (MEKK1, MKK4/MKK5 and MPK3/MPK6) downstream of bacterial flagellin receptor FLS2. May be involved in hypersensitive response (HR)-mediated signaling cascade by modulating LIP5 phosphorylation and subsequent multivesicular bodies (MVBs) trafficking. May phosphorylate regulators of WRKY transcription factors. Mediates the phosphorylation of VIP1 and subsequent stress genes transcription in response to Agrobacterium. MKK9-MPK3/MPK6 module phosphorylates and activates EIN3, leading to the promotion of EIN3-mediated transcription in ethylene signaling. MPK3/MPK6 cascade regulates camalexin synthesis through transcriptional regulation of the biosynthetic genes after pathogen infection. YDA-MKK4/MKK5-MPK3/MPK6 module regulates stomatal cell fate before the guard mother cell (GMC) is specified. When activated, reinforces the feedback loop by phosphorylating BASL, and inhibits stomatal fate by phosphorylating SPCH. This MAPK cascade also functions downstream of the ER receptor in regulating coordinated local cell proliferation, which shapes the morphology of plant organs. The protein is Mitogen-activated protein kinase 3 of Arabidopsis thaliana (Mouse-ear cress).